The sequence spans 642 residues: Threonine--tRNA ligase (642 aa).

The TGS domain maps to 1–61; sequence MPVITLPDGS…ENDAQLSIIT (61 aa). Positions 243 to 534 are catalytic; the sequence is DHRKIGKQLD…LTEEFAGFFP (292 aa). The residue at position 286 (Lys286) is an N6-acetyllysine. Residues Cys334, His385, and His511 each coordinate Zn(2+).

It belongs to the class-II aminoacyl-tRNA synthetase family. In terms of assembly, homodimer. Zn(2+) is required as a cofactor.

The protein localises to the cytoplasm. The enzyme catalyses tRNA(Thr) + L-threonine + ATP = L-threonyl-tRNA(Thr) + AMP + diphosphate + H(+). Its function is as follows. Catalyzes the attachment of threonine to tRNA(Thr) in a two-step reaction: L-threonine is first activated by ATP to form Thr-AMP and then transferred to the acceptor end of tRNA(Thr). Also edits incorrectly charged L-seryl-tRNA(Thr). In Escherichia coli O8 (strain IAI1), this protein is Threonine--tRNA ligase.